The primary structure comprises 495 residues: MQVIETLAEGLKREIKVVIPAKDMEDKMNERLADVKDKIRINGFRPGKVPAAHLKKVYGKSIMAELVNEIVREQPTAILSSRGEKSATQPEIAMTEDKDEADKILSAQQDFEFTLSYEVLPPIELKSVKGIKVTREVIDISDDEVTEQVLKVAESARSYESKTGKAANGDRVAMDYVGKVDGEAFEGGTDQGAELVIGSGRFIPGFEDQLVGVKAGEEKTITVTFPADYPAKNLAGKEATFDITVKDVAAPGAVEINDELASKLGIESADRLKEIVRGQIESQYGSLTRQKLKRQILDQLDEMYKFETPASLVDAEYNGIWSQVNNDLAQSGKTFEDEDTTEEKAREEYKTLAERRVRLGLVLSEIGEKAGVEVTEDEMQRAIYDQLRQYPGQEKQILEFFRSQPGAAASIRAPIFEEKVIDHLLTEIDVTDKKVTKEELLAEDEGEAKAETKKAAPKKKAAAKTEAAEAGEGEEAAAPKKKAAPKKKAADESAE.

The 86-residue stretch at 169–254 folds into the PPIase FKBP-type domain; sequence GDRVAMDYVG…VKDVAAPGAV (86 aa). Positions 441–495 are disordered; that stretch reads LAEDEGEAKAETKKAAPKKKAAAKTEAAEAGEGEEAAAPKKKAAPKKKAADESAE.

It belongs to the FKBP-type PPIase family. Tig subfamily.

The protein localises to the cytoplasm. The enzyme catalyses [protein]-peptidylproline (omega=180) = [protein]-peptidylproline (omega=0). Involved in protein export. Acts as a chaperone by maintaining the newly synthesized protein in an open conformation. Functions as a peptidyl-prolyl cis-trans isomerase. This chain is Trigger factor, found in Rhizobium etli (strain CIAT 652).